We begin with the raw amino-acid sequence, 654 residues long: Acetyl-coenzyme A synthetase (654 aa).

Residues 191–194 (RRGQ) and T315 each bind CoA. ATP contacts are provided by residues 391–393 (GEP), 415–420 (DTWWQT), D506, and R521. S529 is a binding site for CoA. ATP is bound at residue R532. Positions 543, 545, and 548 each coordinate Mg(2+). Position 615 is an N6-acetyllysine (K615).

This sequence belongs to the ATP-dependent AMP-binding enzyme family. Mg(2+) serves as cofactor. Acetylated. Deacetylation by the SIR2-homolog deacetylase activates the enzyme.

The catalysed reaction is acetate + ATP + CoA = acetyl-CoA + AMP + diphosphate. Functionally, catalyzes the conversion of acetate into acetyl-CoA (AcCoA), an essential intermediate at the junction of anabolic and catabolic pathways. AcsA undergoes a two-step reaction. In the first half reaction, AcsA combines acetate with ATP to form acetyl-adenylate (AcAMP) intermediate. In the second half reaction, it can then transfer the acetyl group from AcAMP to the sulfhydryl group of CoA, forming the product AcCoA. The sequence is that of Acetyl-coenzyme A synthetase from Gemmatimonas aurantiaca (strain DSM 14586 / JCM 11422 / NBRC 100505 / T-27).